A 441-amino-acid polypeptide reads, in one-letter code: Probable xylan O-acetyltransferase 10 (441 aa).

Over 1–19 (MMKPQHGGMAGHGGGRTRS) the chain is Cytoplasmic. The chain crosses the membrane as a helical; Signal-anchor for type II membrane protein span at residues 20–40 (PFLTSYALTLAFITFVSVLYF). Topologically, residues 41 to 441 (KDFSSTLHQP…ELLYSKLFFP (401 aa)) are lumenal. Residues 50–81 (PFLTRPPPHRRQIARPRAPSHHHGGGSSSGGG) are disordered. A compositionally biased stretch (basic residues) spans 56–73 (PPHRRQIARPRAPSHHHG). 4 disulfide bridges follow: cysteine 97-cysteine 148, cysteine 119-cysteine 184, cysteine 128-cysteine 422, and cysteine 341-cysteine 418. N-linked (GlcNAc...) asparagine glycosylation is present at asparagine 154. The GDS motif signature appears at 171–173 (GDS). The active-site Nucleophile is serine 173. 3 N-linked (GlcNAc...) asparagine glycosylation sites follow: asparagine 212, asparagine 343, and asparagine 381. Aspartate 417 functions as the Proton donor in the catalytic mechanism. The short motif at 417–420 (DCTH) is the DXXH motif element. The Proton acceptor role is filled by histidine 420.

It belongs to the PC-esterase family. TBL subfamily. In terms of tissue distribution, expressed in roots, leaves and stems.

It is found in the golgi apparatus membrane. Probable xylan acetyltransferase required for 2-O- and 3-O-monoacetylation of xylosyl residues in xylan. Possesses extremely low activity in vitro. In Oryza sativa subsp. japonica (Rice), this protein is Probable xylan O-acetyltransferase 10.